Here is a 149-residue protein sequence, read N- to C-terminus: Nucleoside diphosphate kinase 1 (149 aa).

ATP is bound by residues lysine 9, phenylalanine 57, arginine 85, threonine 91, arginine 102, and asparagine 112. The Pros-phosphohistidine intermediate role is filled by histidine 115.

This sequence belongs to the NDK family. In terms of assembly, homohexamer. Can also form dodecamers. Mg(2+) is required as a cofactor.

The protein resides in the nucleus. The catalysed reaction is a 2'-deoxyribonucleoside 5'-diphosphate + ATP = a 2'-deoxyribonucleoside 5'-triphosphate + ADP. The enzyme catalyses a ribonucleoside 5'-diphosphate + ATP = a ribonucleoside 5'-triphosphate + ADP. Major role in the synthesis of nucleoside triphosphates other than ATP. The ATP gamma phosphate is transferred to the NDP beta phosphate via a ping-pong mechanism, using a phosphorylated active-site intermediate. Involved in transcription regulation. Has G-quadruplex (G4) DNA-binding activity, which is independent of its nucleotide-binding and kinase activity. Binds folded G4 with low nanomolar affinity and corresponding unfolded G-rich DNA more weakly. Stabilizes folded G4s regardless of whether they are prefolded or not. The protein is Nucleoside diphosphate kinase 1 of Zea mays (Maize).